Here is a 247-residue protein sequence, read N- to C-terminus: tRNA pseudouridine synthase A 1 (247 aa).

Asp53 serves as the catalytic Nucleophile. A substrate-binding site is contributed by Tyr111.

Belongs to the tRNA pseudouridine synthase TruA family. In terms of assembly, homodimer.

It carries out the reaction uridine(38/39/40) in tRNA = pseudouridine(38/39/40) in tRNA. Its function is as follows. Formation of pseudouridine at positions 38, 39 and 40 in the anticodon stem and loop of transfer RNAs. The sequence is that of tRNA pseudouridine synthase A 1 from Bacillus cereus (strain ZK / E33L).